The primary structure comprises 452 residues: UDP-N-acetylmuramoylalanine--D-glutamate ligase (452 aa).

Residue 119-125 (GSNGKTT) coordinates ATP.

The protein belongs to the MurCDEF family.

It localises to the cytoplasm. It catalyses the reaction UDP-N-acetyl-alpha-D-muramoyl-L-alanine + D-glutamate + ATP = UDP-N-acetyl-alpha-D-muramoyl-L-alanyl-D-glutamate + ADP + phosphate + H(+). It functions in the pathway cell wall biogenesis; peptidoglycan biosynthesis. Its function is as follows. Cell wall formation. Catalyzes the addition of glutamate to the nucleotide precursor UDP-N-acetylmuramoyl-L-alanine (UMA). This Streptococcus pyogenes serotype M4 (strain MGAS10750) protein is UDP-N-acetylmuramoylalanine--D-glutamate ligase.